A 333-amino-acid polypeptide reads, in one-letter code: Ketol-acid reductoisomerase (NADP(+)) (333 aa).

The KARI N-terminal Rossmann domain maps to 1 to 171 (MSNDTQPKIA…GGARANIIKT (171 aa)). NADP(+)-binding positions include 14 to 17 (YGSQ), arginine 37, threonine 42, and 72 to 75 (DMVQ). The active site involves histidine 97. Glycine 123 is an NADP(+) binding site. The KARI C-terminal knotted domain occupies 172–317 (TFKEETETDL…KKLRAKMVWL (146 aa)). Mg(2+) is bound by residues aspartate 180, glutamate 184, glutamate 216, and glutamate 220. Serine 241 is a substrate binding site.

This sequence belongs to the ketol-acid reductoisomerase family. Mg(2+) serves as cofactor.

It catalyses the reaction (2R)-2,3-dihydroxy-3-methylbutanoate + NADP(+) = (2S)-2-acetolactate + NADPH + H(+). The enzyme catalyses (2R,3R)-2,3-dihydroxy-3-methylpentanoate + NADP(+) = (S)-2-ethyl-2-hydroxy-3-oxobutanoate + NADPH + H(+). It functions in the pathway amino-acid biosynthesis; L-isoleucine biosynthesis; L-isoleucine from 2-oxobutanoate: step 2/4. The protein operates within amino-acid biosynthesis; L-valine biosynthesis; L-valine from pyruvate: step 2/4. In terms of biological role, involved in the biosynthesis of branched-chain amino acids (BCAA). Catalyzes an alkyl-migration followed by a ketol-acid reduction of (S)-2-acetolactate (S2AL) to yield (R)-2,3-dihydroxy-isovalerate. In the isomerase reaction, S2AL is rearranged via a Mg-dependent methyl migration to produce 3-hydroxy-3-methyl-2-ketobutyrate (HMKB). In the reductase reaction, this 2-ketoacid undergoes a metal-dependent reduction by NADPH to yield (R)-2,3-dihydroxy-isovalerate. The sequence is that of Ketol-acid reductoisomerase (NADP(+)) from Xanthomonas euvesicatoria pv. vesicatoria (strain 85-10) (Xanthomonas campestris pv. vesicatoria).